A 205-amino-acid chain; its full sequence is Large ribosomal subunit protein bL25 (205 aa).

Residues 180-205 (HEEVAEEAEETEGEDAEEAPAAEGEE) form a disordered region. Over residues 183 to 205 (VAEEAEETEGEDAEEAPAAEGEE) the composition is skewed to acidic residues.

The protein belongs to the bacterial ribosomal protein bL25 family. CTC subfamily. As to quaternary structure, part of the 50S ribosomal subunit; part of the 5S rRNA/L5/L18/L25 subcomplex. Contacts the 5S rRNA. Binds to the 5S rRNA independently of L5 and L18.

This is one of the proteins that binds to the 5S RNA in the ribosome where it forms part of the central protuberance. The polypeptide is Large ribosomal subunit protein bL25 (Corynebacterium diphtheriae (strain ATCC 700971 / NCTC 13129 / Biotype gravis)).